A 407-amino-acid polypeptide reads, in one-letter code: Peptidase T (407 aa).

Position 82 (His-82) interacts with Zn(2+). Asp-84 is a catalytic residue. Position 143 (Asp-143) interacts with Zn(2+). Residue Glu-177 is the Proton acceptor of the active site. Positions 178, 200, and 382 each coordinate Zn(2+).

It belongs to the peptidase M20B family. Requires Zn(2+) as cofactor.

It is found in the cytoplasm. It catalyses the reaction Release of the N-terminal residue from a tripeptide.. Cleaves the N-terminal amino acid of tripeptides. The polypeptide is Peptidase T (Streptococcus pyogenes serotype M18 (strain MGAS8232)).